The primary structure comprises 360 residues: Phenylalanine--tRNA ligase alpha subunit (360 aa).

Glu260 serves as a coordination point for Mg(2+).

The protein belongs to the class-II aminoacyl-tRNA synthetase family. Phe-tRNA synthetase alpha subunit type 1 subfamily. As to quaternary structure, tetramer of two alpha and two beta subunits. Requires Mg(2+) as cofactor.

The protein resides in the cytoplasm. The catalysed reaction is tRNA(Phe) + L-phenylalanine + ATP = L-phenylalanyl-tRNA(Phe) + AMP + diphosphate + H(+). In Bradyrhizobium sp. (strain ORS 278), this protein is Phenylalanine--tRNA ligase alpha subunit.